Here is a 310-residue protein sequence, read N- to C-terminus: Acetaldehyde dehydrogenase 1 (310 aa).

NAD(+) is bound at residue 12-15 (SGNI). Cys132 serves as the catalytic Acyl-thioester intermediate. Residues 163–171 (SAGPGTRAN) and Asn287 contribute to the NAD(+) site.

This sequence belongs to the acetaldehyde dehydrogenase family.

It carries out the reaction acetaldehyde + NAD(+) + CoA = acetyl-CoA + NADH + H(+). The protein is Acetaldehyde dehydrogenase 1 of Pseudomonas putida (strain W619).